The chain runs to 361 residues: Histidinol-phosphate aminotransferase (361 aa).

The residue at position 219 (lysine 219) is an N6-(pyridoxal phosphate)lysine.

Belongs to the class-II pyridoxal-phosphate-dependent aminotransferase family. Histidinol-phosphate aminotransferase subfamily. As to quaternary structure, homodimer. The cofactor is pyridoxal 5'-phosphate.

It carries out the reaction L-histidinol phosphate + 2-oxoglutarate = 3-(imidazol-4-yl)-2-oxopropyl phosphate + L-glutamate. The protein operates within amino-acid biosynthesis; L-histidine biosynthesis; L-histidine from 5-phospho-alpha-D-ribose 1-diphosphate: step 7/9. This chain is Histidinol-phosphate aminotransferase, found in Acinetobacter baylyi (strain ATCC 33305 / BD413 / ADP1).